Reading from the N-terminus, the 466-residue chain is tRNA modification GTPase MnmE (466 aa).

Positions 23, 86, and 125 each coordinate (6S)-5-formyl-5,6,7,8-tetrahydrofolate. One can recognise a TrmE-type G domain in the interval 221-388; it reads GIPVAIVGEP…LKNELLSFVN (168 aa). Asn231 lines the K(+) pocket. GTP-binding positions include 231 to 236, 250 to 256, and 275 to 278; these read NVGKST, SDIAGTT, and DTAG. Mg(2+) is bound at residue Ser235. K(+)-binding residues include Ser250, Ile252, and Thr255. Thr256 provides a ligand contact to Mg(2+). Residue Lys466 coordinates (6S)-5-formyl-5,6,7,8-tetrahydrofolate.

The protein belongs to the TRAFAC class TrmE-Era-EngA-EngB-Septin-like GTPase superfamily. TrmE GTPase family. In terms of assembly, homodimer. Heterotetramer of two MnmE and two MnmG subunits. K(+) is required as a cofactor.

The protein localises to the cytoplasm. In terms of biological role, exhibits a very high intrinsic GTPase hydrolysis rate. Involved in the addition of a carboxymethylaminomethyl (cmnm) group at the wobble position (U34) of certain tRNAs, forming tRNA-cmnm(5)s(2)U34. This Flavobacterium johnsoniae (strain ATCC 17061 / DSM 2064 / JCM 8514 / BCRC 14874 / CCUG 350202 / NBRC 14942 / NCIMB 11054 / UW101) (Cytophaga johnsonae) protein is tRNA modification GTPase MnmE.